A 389-amino-acid chain; its full sequence is Phospho-N-acetylmuramoyl-pentapeptide-transferase (389 aa).

Helical transmembrane passes span Arg-25–Ile-45, Thr-73–Leu-93, Phe-97–Tyr-117, Phe-135–Ala-155, Ile-190–Ala-210, Gly-222–Met-242, Gly-258–Trp-278, Val-286–Ile-306, Ile-311–Val-331, and Gln-366–Leu-386.

The protein belongs to the glycosyltransferase 4 family. MraY subfamily. Requires Mg(2+) as cofactor.

The protein localises to the cell inner membrane. It carries out the reaction UDP-N-acetyl-alpha-D-muramoyl-L-alanyl-gamma-D-glutamyl-meso-2,6-diaminopimeloyl-D-alanyl-D-alanine + di-trans,octa-cis-undecaprenyl phosphate = di-trans,octa-cis-undecaprenyl diphospho-N-acetyl-alpha-D-muramoyl-L-alanyl-D-glutamyl-meso-2,6-diaminopimeloyl-D-alanyl-D-alanine + UMP. It participates in cell wall biogenesis; peptidoglycan biosynthesis. Functionally, catalyzes the initial step of the lipid cycle reactions in the biosynthesis of the cell wall peptidoglycan: transfers peptidoglycan precursor phospho-MurNAc-pentapeptide from UDP-MurNAc-pentapeptide onto the lipid carrier undecaprenyl phosphate, yielding undecaprenyl-pyrophosphoryl-MurNAc-pentapeptide, known as lipid I. This chain is Phospho-N-acetylmuramoyl-pentapeptide-transferase, found in Burkholderia cenocepacia (strain HI2424).